A 569-amino-acid chain; its full sequence is Putative ABC transporter ATP-binding protein TTE1589 (569 aa).

ABC transporter domains lie at isoleucine 8 to methionine 248 and isoleucine 309 to lysine 542. Residues glycine 43–serine 50 and glycine 342–threonine 349 contribute to the ATP site.

The protein belongs to the ABC transporter superfamily.

The protein localises to the cell membrane. Probably part of an ABC transporter complex. Responsible for energy coupling to the transport system. The sequence is that of Putative ABC transporter ATP-binding protein TTE1589 from Caldanaerobacter subterraneus subsp. tengcongensis (strain DSM 15242 / JCM 11007 / NBRC 100824 / MB4) (Thermoanaerobacter tengcongensis).